Here is a 2551-residue protein sequence, read N- to C-terminus: Probable polyketide synthase 13 (2551 aa).

A Ketosynthase family 3 (KS3) domain is found at 10-434 (ENDVAIIGIG…GSNCCLILSQ (425 aa)). Catalysis depends on for beta-ketoacyl synthase activity residues cysteine 176, histidine 317, and histidine 358. Residues 621–654 (GIEVSFIIGHSLGEIPAAYCSGMINIDTLCYLIY) form an acyl/malonyl transferase region. Serine 631 functions as the For acyl/malonyl transferase activity in the catalytic mechanism. The interval 928–1057 (TDNLGYLNEN…GDFQLSNHSS (130 aa)) is N-terminal hotdog fold. Positions 928–1226 (TDNLGYLNEN…CTSLTPIKES (299 aa)) constitute a PKS/mFAS DH domain. The active-site Proton acceptor; for dehydratase activity is histidine 961. The tract at residues 1076–1226 (NLTKLSRDEL…CTSLTPIKES (151 aa)) is C-terminal hotdog fold. The active-site Proton donor; for dehydratase activity is aspartate 1136. The 78-residue stretch at 2465-2542 (DCQTIIKDSF…SSIQYTINSF (78 aa)) folds into the Carrier domain. Position 2502 is an O-(pantetheine 4'-phosphoryl)serine (serine 2502).

Pantetheine 4'-phosphate serves as cofactor.

Its function is as follows. Probable polyketide synthase. The sequence is that of Probable polyketide synthase 13 (pks13) from Dictyostelium discoideum (Social amoeba).